The primary structure comprises 109 residues: Fluoride-specific ion channel FluC (109 aa).

3 helical membrane-spanning segments follow: residues 21–41 (FFLN…GFVI), 52–72 (ILLT…LFLY), and 83–103 (LFFY…AGFL).

The protein belongs to the fluoride channel Fluc/FEX (TC 1.A.43) family.

The protein localises to the cell inner membrane. It carries out the reaction fluoride(in) = fluoride(out). Fluoride-specific ion channel. Important for reducing fluoride concentration in the cell, thus reducing its toxicity. The chain is Fluoride-specific ion channel FluC from Prochlorococcus marinus (strain MIT 9515).